We begin with the raw amino-acid sequence, 403 residues long: Na(+)-translocating NADH-quinone reductase subunit B (403 aa).

The next 9 membrane-spanning stretches (helical) occupy residues 56-76 (MMITVWLCTFPAMFFGMWNTG), 121-141 (AYFLPIYAVTFIVGGFWEVLF), 163-183 (ILPPTIPLWQVALGISFGVVI), 220-240 (WTAVDGYAGATALSLGFAGGI), 258-278 (IHGSIGETSTLAIFIGGAVLI), 287-307 (IVTGVMLGMIALSTLFNLIGS), 312-332 (LFGMPWYWHMVVGGFAFGMIF), 348-368 (WVFGILIGVMVVLIRVVNPAF), and 371-391 (GMMLAILFANLCAPLIDHFVI). An FMN phosphoryl threonine modification is found at threonine 230.

Belongs to the NqrB/RnfD family. In terms of assembly, composed of six subunits; NqrA, NqrB, NqrC, NqrD, NqrE and NqrF. The cofactor is FMN.

It is found in the cell inner membrane. It carries out the reaction a ubiquinone + n Na(+)(in) + NADH + H(+) = a ubiquinol + n Na(+)(out) + NAD(+). Its function is as follows. NQR complex catalyzes the reduction of ubiquinone-1 to ubiquinol by two successive reactions, coupled with the transport of Na(+) ions from the cytoplasm to the periplasm. NqrA to NqrE are probably involved in the second step, the conversion of ubisemiquinone to ubiquinol. This chain is Na(+)-translocating NADH-quinone reductase subunit B, found in Stutzerimonas stutzeri (strain A1501) (Pseudomonas stutzeri).